Consider the following 215-residue polypeptide: Histone H1.1 (215 aa).

The disordered stretch occupies residues 1-43 (MSETVPPAPAASAAPEKPLAGKKAKKPAKAAAASKKKPAGPSV). At Ser-2 the chain carries N-acetylserine. Ser-2 and Ser-12 each carry phosphoserine. Lys-17 is modified (N6-acetyllysine). Residues 20-38 (AGKKAKKPAKAAAASKKKP) are compositionally biased toward basic residues. Position 37 is an N6-(beta-hydroxybutyryl)lysine (Lys-37). The H15 domain maps to 39–112 (AGPSVSELIV…GASGSFKLNK (74 aa)). A Phosphoserine modification is found at Ser-44. The residue at position 55 (Lys-55) is an N6-(beta-hydroxybutyryl)lysine. Arg-57 bears the Citrulline mark. Lys-67 carries the N6-(beta-hydroxybutyryl)lysine modification. Lys-78 carries the N6-acetyllysine modification. Residue Lys-88 is modified to N6-(beta-hydroxybutyryl)lysine. Lys-93 is modified (N6-(beta-hydroxybutyryl)lysine; alternate). At Lys-93 the chain carries N6-acetyllysine; alternate. Residues 94–215 (GTLVQTKGTG…KPKKAAPKKK (122 aa)) form a disordered region. Position 107 is a phosphoserine (Ser-107). Lys-109 is modified (N6-(beta-hydroxybutyryl)lysine). A compositionally biased stretch (low complexity) spans 122 to 147 (GASKVATKTKATGASKKLKKATGASK). An N6-acetyllysine modification is found at Lys-125. 2 stretches are compositionally biased toward basic residues: residues 148 to 181 (KSVK…KKVA) and 188 to 215 (KAVK…PKKK). Position 204 is a phosphothreonine (Thr-204).

This sequence belongs to the histone H1/H5 family. As to quaternary structure, interacts with DFFB. Post-translationally, H1 histones are progressively phosphorylated during the cell cycle, becoming maximally phosphorylated during late G2 phase and M phase, and being dephosphorylated sharply thereafter. In terms of processing, citrullination at Arg-57 (H1R54ci) by PADI4 takes place within the DNA-binding site of H1 and results in its displacement from chromatin and global chromatin decondensation, thereby promoting pluripotency and stem cell maintenance.

The protein localises to the nucleus. Its subcellular location is the chromosome. Functionally, histone H1 protein binds to linker DNA between nucleosomes forming the macromolecular structure known as the chromatin fiber. Histones H1 are necessary for the condensation of nucleosome chains into higher-order structured fibers. Also acts as a regulator of individual gene transcription through chromatin remodeling, nucleosome spacing and DNA methylation. The chain is Histone H1.1 from Homo sapiens (Human).